Consider the following 610-residue polypeptide: F-box/LRR-repeat protein 4 (610 aa).

The F-box domain occupies 5-52; the sequence is DRINNCLPEELILEIFRRLESKPNRDACSLVCKRWLSLERFSRTTLRI. LRR repeat units follow at residues 53-79, 124-149, 150-175, 178-200, 201-227, 228-253, 256-277, 278-303, 304-329, 330-355, 356-381, 382-407, 408-433, 434-459, 460-484, 485-510, 511-536, 537-562, and 563-588; these read GASF…HVDE, SSSL…SLIW, CPNV…DLQG, VGDQ…NLRF, CEGL…GVAA, SAKI…YLDS, IHDK…LKLQ, CVSV…ALYS, FQHF…TLSD, CYFV…EING, CHNI…ALLY, CQRI…HLVD, CSGI…HIRR, CYEI…SLRF, CDKV…NVSG, CNQI…DISV, LQNI…VLSH, CHHI…HMVY, and CPGI…LIEK. Residues 88–125 are disordered; that stretch reads LSPSPKRKRGRDSSSPSSSKRKKLTDKTHSGAENVESS.

The chain is F-box/LRR-repeat protein 4 (FBL4) from Arabidopsis thaliana (Mouse-ear cress).